The following is a 180-amino-acid chain: Translation initiation factor IF-3 (180 aa).

It belongs to the IF-3 family. Monomer.

Its subcellular location is the cytoplasm. Functionally, IF-3 binds to the 30S ribosomal subunit and shifts the equilibrium between 70S ribosomes and their 50S and 30S subunits in favor of the free subunits, thus enhancing the availability of 30S subunits on which protein synthesis initiation begins. This chain is Translation initiation factor IF-3, found in Pectobacterium atrosepticum (strain SCRI 1043 / ATCC BAA-672) (Erwinia carotovora subsp. atroseptica).